The chain runs to 277 residues: DNA-binding transcriptional activator MhpR (277 aa).

The 63-residue stretch at 12–74 (VRGLTRGLML…PSDDSFRLTI (63 aa)) folds into the HTH iclR-type domain. Positions 34 to 53 (VGLLAELSGLHRTTVRRLLE) form a DNA-binding region, H-T-H motif. Residues 89-262 (ISALAAPLLG…AKQIEEGVES (174 aa)) form the IclR-ED domain.

Activator of the mhpABCDFE operon coding for components of the 3-hydroxyphenylpropionate degradation pathway. The sequence is that of DNA-binding transcriptional activator MhpR (mhpR) from Escherichia coli (strain K12).